A 319-amino-acid chain; its full sequence is Cytochrome f (319 aa).

The N-terminal stretch at 1–35 (MQNKDACKSLSSWVSLSISLLVLTVPLIWPYNSTA) is a signal peptide. Residues Phe36, Cys56, Cys59, and His60 each contribute to the heme site. Residues 285–305 (IQGLLVFFASVILAQIFLVLK) traverse the membrane as a helical segment.

It belongs to the cytochrome f family. The 4 large subunits of the cytochrome b6-f complex are cytochrome b6, subunit IV (17 kDa polypeptide, petD), cytochrome f and the Rieske protein, while the 4 small subunits are PetG, PetL, PetM and PetN. The complex functions as a dimer. The cofactor is heme.

The protein resides in the plastid. It is found in the chloroplast thylakoid membrane. Its function is as follows. Component of the cytochrome b6-f complex, which mediates electron transfer between photosystem II (PSII) and photosystem I (PSI), cyclic electron flow around PSI, and state transitions. The sequence is that of Cytochrome f from Staurastrum punctulatum (Green alga).